We begin with the raw amino-acid sequence, 315 residues long: 7,8-didemethyl-8-hydroxy-5-deazariboflavin synthase (315 aa).

Residues 6-237 (ITYSPAFTLV…EDITIQIPAN (232 aa)) enclose the Radical SAM core domain. Residues Cys-20, Cys-24, and Cys-27 each contribute to the [4Fe-4S] cluster site.

It belongs to the radical SAM superfamily. CofG family. As to quaternary structure, consists of two subunits, CofG and CofH. [4Fe-4S] cluster serves as cofactor.

The enzyme catalyses 5-amino-5-(4-hydroxybenzyl)-6-(D-ribitylimino)-5,6-dihydrouracil + S-adenosyl-L-methionine = 7,8-didemethyl-8-hydroxy-5-deazariboflavin + 5'-deoxyadenosine + L-methionine + NH4(+) + H(+). It participates in cofactor biosynthesis; coenzyme F0 biosynthesis. Functionally, catalyzes the radical-mediated synthesis of 7,8-didemethyl-8-hydroxy-5-deazariboflavin from 5-amino-5-(4-hydroxybenzyl)-6-(D-ribitylimino)-5,6-dihydrouracil. This Thermosynechococcus vestitus (strain NIES-2133 / IAM M-273 / BP-1) protein is 7,8-didemethyl-8-hydroxy-5-deazariboflavin synthase.